We begin with the raw amino-acid sequence, 339 residues long: HTH-type transcriptional regulator SyrM 2 (339 aa).

In terms of domain architecture, HTH lysR-type spans 32–89 (VDLNLLVELEALLQYRNITHAAQHVGRSQPAMSRALSRLRDMFNDDLLVRGSSGLVPT). Positions 49 to 68 (ITHAAQHVGRSQPAMSRALS) form a DNA-binding region, H-T-H motif.

It belongs to the LysR transcriptional regulatory family.

Functionally, acts in trans to stimulate nod gene expression. This Sinorhizobium fredii (strain NBRC 101917 / NGR234) protein is HTH-type transcriptional regulator SyrM 2 (syrM2).